A 279-amino-acid polypeptide reads, in one-letter code: Oxygen-dependent coproporphyrinogen-III oxidase (279 aa).

Serine 102 lines the substrate pocket. The a divalent metal cation site is built by histidine 106 and histidine 116. The Proton donor role is filled by histidine 116. A substrate-binding site is contributed by 118–120 (NTR). Positions 149 and 179 each coordinate a divalent metal cation. Residues 244-279 (YVEFNLLYDRGTKFGLMTDGNVEAILMSLPPEVKFN) are important for dimerization.

This sequence belongs to the aerobic coproporphyrinogen-III oxidase family. In terms of assembly, homodimer. Requires a divalent metal cation as cofactor.

Its subcellular location is the cytoplasm. It carries out the reaction coproporphyrinogen III + O2 + 2 H(+) = protoporphyrinogen IX + 2 CO2 + 2 H2O. Its pathway is porphyrin-containing compound metabolism; protoporphyrin-IX biosynthesis; protoporphyrinogen-IX from coproporphyrinogen-III (O2 route): step 1/1. Involved in the heme biosynthesis. Catalyzes the aerobic oxidative decarboxylation of propionate groups of rings A and B of coproporphyrinogen-III to yield the vinyl groups in protoporphyrinogen-IX. This chain is Oxygen-dependent coproporphyrinogen-III oxidase, found in Rickettsia rickettsii (strain Iowa).